The primary structure comprises 242 residues: Ras-like protein family member 11A (242 aa).

Residues 17–241 are small GTPase-like; it reads ESSSDYLLPK…SSKAKASSAL (225 aa). Residues 34–41, 81–88, and 147–150 each bind GTP; these read GAGCVGKS, DTPGGIQA, and NKGD.

Belongs to the small GTPase superfamily. Ras family. In terms of assembly, interacts with UBF/UBTF.

The protein localises to the nucleus. It is found in the nucleolus. It catalyses the reaction GTP + H2O = GDP + phosphate + H(+). Functionally, regulator of rDNA transcription. Acts in cooperation UBF/UBTF and positively regulates RNA polymerase I transcription. The chain is Ras-like protein family member 11A from Mus musculus (Mouse).